Here is a 1067-residue protein sequence, read N- to C-terminus: Sal-like protein 4 (1067 aa).

Residues 1 to 62 (MSRRKQAKPQ…SEDSIPVKRP (62 aa)) are disordered. Residues 15 to 42 (EEGQGEQPQQLPSPDLAEALAAEEPGAP) are compositionally biased toward low complexity. At S53 the chain carries Phosphoserine. The C2H2-type 1; atypical zinc finger occupies 68–90 (HICNKCCAEFFSLSEFMEHKKSC). Positions 115–140 (ALSHQLGSPSNKDSLQENGSSSGDLK) are disordered. Over residues 119-137 (QLGSPSNKDSLQENGSSSG) the composition is skewed to polar residues. K151 participates in a covalent cross-link: Glycyl lysine isopeptide (Lys-Gly) (interchain with G-Cter in SUMO1); alternate. K151 participates in a covalent cross-link: Glycyl lysine isopeptide (Lys-Gly) (interchain with G-Cter in SUMO2); alternate. Glycyl lysine isopeptide (Lys-Gly) (interchain with G-Cter in SUMO2) cross-links involve residues K170, K185, and K291. Phosphoserine is present on S308. A Glycyl lysine isopeptide (Lys-Gly) (interchain with G-Cter in SUMO1); alternate cross-link involves residue K317. Residue K317 forms a Glycyl lysine isopeptide (Lys-Gly) (interchain with G-Cter in SUMO2); alternate linkage. Residue K377 forms a Glycyl lysine isopeptide (Lys-Gly) (interchain with G-Cter in SUMO2) linkage. A Glycyl lysine isopeptide (Lys-Gly) (interchain with G-Cter in SUMO1); alternate cross-link involves residue K379. K379 is covalently cross-linked (Glycyl lysine isopeptide (Lys-Gly) (interchain with G-Cter in SUMO2); alternate). C2H2-type zinc fingers lie at residues 387 to 409 (HKCRYCPKVFGTDSSLQIHLRSH) and 415 to 437 (YVCPICGHRFTTKGNLKVHLQRH). Residue K441 forms a Glycyl lysine isopeptide (Lys-Gly) (interchain with G-Cter in SUMO2) linkage. The segment at 471-521 (DESSLSVDAEPVPVTGTPSLGLPQKLTSGPNSRDLMGGSLPNDMQPGPSPE) is disordered. K557 participates in a covalent cross-link: Glycyl lysine isopeptide (Lys-Gly) (interchain with G-Cter in SUMO2). C2H2-type zinc fingers lie at residues 573-595 (NECLICHRVLSCQSSLKMHYRTH) and 601-623 (FQCKICGRAFSTKGNLKTHLGVH). Glycyl lysine isopeptide (Lys-Gly) (interchain with G-Cter in SUMO2) cross-links involve residues K604 and K630. The C2H2-type 6 zinc-finger motif lies at 633 to 655 (HSCPICQKKFTNAVMLQQHIRMH). Disordered regions lie at residues 682–716 (ENGSASGVCQDDAAEGMEAEEVCSQDVPSGPSTVS) and 752–835 (RQSS…SLPP). Residues 693-704 (DAAEGMEAEEVC) show a composition bias toward acidic residues. Polar residues-rich tracts occupy residues 707-716 (DVPSGPSTVS) and 752-761 (RQSSRENSSL). Residues S785 and S798 each carry the phosphoserine modification. The span at 798–809 (SPANSQAGSVKS) shows a compositional bias: polar residues. Basic and acidic residues predominate over residues 810–829 (RSPEGHKAEGVESCRVDTEG). K846 is covalently cross-linked (Glycyl lysine isopeptide (Lys-Gly) (interchain with G-Cter in SUMO1); alternate). Residue K846 forms a Glycyl lysine isopeptide (Lys-Gly) (interchain with G-Cter in SUMO2); alternate linkage. A C2H2-type 7 zinc finger spans residues 880 to 902 (HCCTRCGKNFSSASALQIHERTH). K906 participates in a covalent cross-link: Glycyl lysine isopeptide (Lys-Gly) (interchain with G-Cter in SUMO2). The C2H2-type 8 zinc-finger motif lies at 908-930 (FVCNICGRAFTTKGNLKVHYMTH). Residues K942 and K957 each participate in a glycyl lysine isopeptide (Lys-Gly) (interchain with G-Cter in SUMO2) cross-link. Phosphoserine is present on S1029.

The protein belongs to the sal C2H2-type zinc-finger protein family. In terms of assembly, interacts with POU5F1/OCT4. Interacts with NANOG. Interacts with BEND3. Interacts with NSD2 (via PHD-type zinc fingers 1, 2 and 3). Interacts with NRBP1. Sumoylation with both SUMO1 and SUMO2 regulates the stability, subcellular localization, transcriptional activity, and may reduce interaction with POU5F1/OCT4.

The protein resides in the cytoplasm. It localises to the nucleus. In terms of biological role, transcription factor with a key role in the maintenance and self-renewal of embryonic and hematopoietic stem cells. The protein is Sal-like protein 4 (Sall4) of Mus musculus (Mouse).